The chain runs to 630 residues: DNA topoisomerase 4 subunit B (630 aa).

ATP contacts are provided by residues Tyr5, Asn42, Asp69, 110–116 (GLHGVGI), and Lys334. In terms of domain architecture, Toprim spans 412–525 (TELFLVEGDS…NGHVYVALPP (114 aa)). Residues Glu418, Asp490, and Asp492 each coordinate Mg(2+).

Belongs to the type II topoisomerase family. ParE type 1 subfamily. Heterotetramer composed of ParC and ParE. Requires Mg(2+) as cofactor. Mn(2+) serves as cofactor. The cofactor is Ca(2+).

It carries out the reaction ATP-dependent breakage, passage and rejoining of double-stranded DNA.. Functionally, topoisomerase IV is essential for chromosome segregation. It relaxes supercoiled DNA. Performs the decatenation events required during the replication of a circular DNA molecule. This Salmonella typhi protein is DNA topoisomerase 4 subunit B.